The chain runs to 326 residues: Diaminopimelate epimerase (326 aa).

Residues Asn13 and Asn72 each contribute to the substrate site. Cys81 functions as the Proton donor in the catalytic mechanism. Residues 82-83 (GN), Asn169, Asn205, and 223-224 (ER) contribute to the substrate site. The active-site Proton acceptor is Cys232. 233 to 234 (GT) contributes to the substrate binding site.

Belongs to the diaminopimelate epimerase family. In terms of assembly, homodimer.

It localises to the cytoplasm. It catalyses the reaction (2S,6S)-2,6-diaminopimelate = meso-2,6-diaminopimelate. It participates in amino-acid biosynthesis; L-lysine biosynthesis via DAP pathway; DL-2,6-diaminopimelate from LL-2,6-diaminopimelate: step 1/1. Its function is as follows. Catalyzes the stereoinversion of LL-2,6-diaminopimelate (L,L-DAP) to meso-diaminopimelate (meso-DAP), a precursor of L-lysine and an essential component of the bacterial peptidoglycan. This chain is Diaminopimelate epimerase, found in Enterococcus faecalis (strain ATCC 700802 / V583).